Consider the following 178-residue polypeptide: Small ribosomal subunit protein uS4 (178 aa).

In terms of domain architecture, S4 RNA-binding spans R104–H166. The disordered stretch occupies residues P157–Q178.

It belongs to the universal ribosomal protein uS4 family. As to quaternary structure, part of the 30S ribosomal subunit. Contacts protein S5. The interaction surface between S4 and S5 is involved in control of translational fidelity.

One of the primary rRNA binding proteins, it binds directly to 16S rRNA where it nucleates assembly of the body of the 30S subunit. Functionally, with S5 and S12 plays an important role in translational accuracy. The protein is Small ribosomal subunit protein uS4 of Methanococcus maripaludis (strain C7 / ATCC BAA-1331).